A 309-amino-acid chain; its full sequence is Low density lipoprotein receptor adapter protein 1-A (309 aa).

The 155-residue stretch at 41–195 (LLEGMLFHLK…SGGEGASSSQ (155 aa)) folds into the PID domain. Residues 179–199 (EKREKSGSGGEGASSSQSDGS) are disordered. The Clathrin box motif lies at 213–217 (LLDLE). Positions 250 to 277 (WELDDGLDEAFARLAESRTNPQVLDIGL) are AP-2 complex binding. Residues 258–267 (EAFARLAESR) carry the [DE]-X(1,2)-F-X-X-[FL]-X-X-X-R motif motif.

Interacts (via PID domain) with ldlr (via NPXY motif). Binds to soluble clathrin trimers and to the adapter protein complex 2 (AP-2, beta 2 subunit). Binds to phosphoinositides, which regulate clathrin bud assembly at the cell surface. Interacts with the VLDL receptor (vldlr). Interacts with the vitellogenin receptor. In terms of tissue distribution, expressed at high level during oogenesis and embryogenesis. Found in the oocyte vegetal cortex. Found at low level in the adult liver and spleen. Found at very low level in testis and heart.

The protein resides in the cytoplasm. Its function is as follows. Adapter protein (clathrin-associated sorting protein (CLASP)) required for efficient endocytosis of the LDL receptor (LDLR). Also involved in the vitellogenin receptor mediated endocytosis of nutrients during oogenesis. The sequence is that of Low density lipoprotein receptor adapter protein 1-A from Xenopus laevis (African clawed frog).